We begin with the raw amino-acid sequence, 113 residues long: Cell cycle control protein 50C (113 aa).

Residues 1-34 (MEERAQHCLSRLLDNSALKQQELPIHRLYFTARR) lie on the Cytoplasmic side of the membrane. The chain crosses the membrane as a helical span at residues 35-55 (VLFVFFATGIFCLCMGIILIL). At 56 to 113 (SARSTQEIEINYTRICANCAKLRENASNFDKECTCSIPFYLSGKMMVGEIQETRLTLH) the chain is on the extracellular side. Asn-66 carries N-linked (GlcNAc...) asparagine glycosylation.

The protein belongs to the CDC50/LEM3 family. Specifically expressed in testis.

It localises to the membrane. The sequence is that of Cell cycle control protein 50C from Homo sapiens (Human).